A 527-amino-acid polypeptide reads, in one-letter code: ATP synthase subunit alpha (527 aa).

Residue 177-184 (GDRQTGKT) coordinates ATP.

It belongs to the ATPase alpha/beta chains family. F-type ATPases have 2 components, CF(1) - the catalytic core - and CF(0) - the membrane proton channel. CF(1) has five subunits: alpha(3), beta(3), gamma(1), delta(1), epsilon(1). CF(0) has four main subunits: a(1), b(1), b'(1) and c(9-12).

It localises to the cell membrane. The enzyme catalyses ATP + H2O + 4 H(+)(in) = ADP + phosphate + 5 H(+)(out). Functionally, produces ATP from ADP in the presence of a proton gradient across the membrane. The alpha chain is a regulatory subunit. This is ATP synthase subunit alpha from Roseiflexus sp. (strain RS-1).